The sequence spans 250 residues: Imidazole glycerol phosphate synthase subunit HisF (250 aa).

Catalysis depends on residues aspartate 11 and aspartate 130.

This sequence belongs to the HisA/HisF family. In terms of assembly, heterodimer of HisH and HisF.

Its subcellular location is the cytoplasm. The enzyme catalyses 5-[(5-phospho-1-deoxy-D-ribulos-1-ylimino)methylamino]-1-(5-phospho-beta-D-ribosyl)imidazole-4-carboxamide + L-glutamine = D-erythro-1-(imidazol-4-yl)glycerol 3-phosphate + 5-amino-1-(5-phospho-beta-D-ribosyl)imidazole-4-carboxamide + L-glutamate + H(+). It participates in amino-acid biosynthesis; L-histidine biosynthesis; L-histidine from 5-phospho-alpha-D-ribose 1-diphosphate: step 5/9. Its function is as follows. IGPS catalyzes the conversion of PRFAR and glutamine to IGP, AICAR and glutamate. The HisF subunit catalyzes the cyclization activity that produces IGP and AICAR from PRFAR using the ammonia provided by the HisH subunit. This is Imidazole glycerol phosphate synthase subunit HisF from Bacteroides fragilis (strain ATCC 25285 / DSM 2151 / CCUG 4856 / JCM 11019 / LMG 10263 / NCTC 9343 / Onslow / VPI 2553 / EN-2).